Here is a 370-residue protein sequence, read N- to C-terminus: Cytochrome b (370 aa).

4 consecutive transmembrane segments (helical) span residues 25-45 (FGSM…FLAV), 69-90 (WLMQ…YIHI), 105-125 (WLSG…GYVL), and 170-190 (FFAL…LHIM). Residues histidine 75 and histidine 89 each coordinate heme b. Heme b-binding residues include histidine 174 and histidine 188. Histidine 193 is a binding site for a ubiquinone. 4 helical membrane passes run 218 to 238 (YKDL…VSFF), 280 to 300 (LGGA…PFTH), 312 to 332 (FMQL…WTAT), and 339 to 358 (FTTI…ISNP).

It belongs to the cytochrome b family. In terms of assembly, the cytochrome bc1 complex contains 3 respiratory subunits (MT-CYB, CYC1 and UQCRFS1), 2 core proteins (UQCRC1 and UQCRC2) and probably 6 low-molecular weight proteins. The cofactor is heme b.

The protein resides in the mitochondrion inner membrane. Its function is as follows. Component of the ubiquinol-cytochrome c reductase complex (complex III or cytochrome b-c1 complex) that is part of the mitochondrial respiratory chain. The b-c1 complex mediates electron transfer from ubiquinol to cytochrome c. Contributes to the generation of a proton gradient across the mitochondrial membrane that is then used for ATP synthesis. The polypeptide is Cytochrome b (MT-CYB) (Chilabothrus fordii (Ford's boa)).